A 497-amino-acid chain; its full sequence is Transcription termination/antitermination protein NusA (497 aa).

An S1 motif domain is found at 135–200 (GKILTGIVKK…RGAQLFVTRS (66 aa)). Residues 302–372 (RHTIDIAVDS…LKIDQKISNI (71 aa)) form the KH domain. 2 consecutive repeat copies span residues 364 to 414 (KIDQ…KKAL) and 439 to 489 (GMNQ…RNIC). Residues 364 to 489 (KIDQKISNIL…MLIMAARNIC (126 aa)) are 2 X 51 AA approximate repeats.

It belongs to the NusA family. In terms of assembly, monomer. Binds directly to the core enzyme of the DNA-dependent RNA polymerase and to nascent RNA.

It is found in the cytoplasm. Functionally, participates in both transcription termination and antitermination. The protein is Transcription termination/antitermination protein NusA of Buchnera aphidicola subsp. Baizongia pistaciae (strain Bp).